Here is a 166-residue protein sequence, read N- to C-terminus: Ubiquitin-conjugating enzyme E2 13 (166 aa).

In terms of domain architecture, UBC core spans Q4–E164. C89 acts as the Glycyl thioester intermediate in catalysis.

Belongs to the ubiquitin-conjugating enzyme family.

The enzyme catalyses S-ubiquitinyl-[E1 ubiquitin-activating enzyme]-L-cysteine + [E2 ubiquitin-conjugating enzyme]-L-cysteine = [E1 ubiquitin-activating enzyme]-L-cysteine + S-ubiquitinyl-[E2 ubiquitin-conjugating enzyme]-L-cysteine.. Its pathway is protein modification; protein ubiquitination. In terms of biological role, accepts the ubiquitin from the E1 complex and catalyzes its covalent attachment to other proteins. Involved in the formation of multiubiquitin chains. Signal the protein for selective degradation. This chain is Ubiquitin-conjugating enzyme E2 13 (UBC13), found in Arabidopsis thaliana (Mouse-ear cress).